A 485-amino-acid polypeptide reads, in one-letter code: uncharacterized protein (485 aa).

A run of 11 helical transmembrane segments spans residues 79–99, 117–137, 139–159, 170–190, 199–219, 275–295, 313–333, 355–375, 380–400, 421–441, and 448–468; these read LVTL…LIFA, VFAL…FLVF, FFSG…LADL, VIYF…SGFI, WEFW…FLLL, ILIC…LVLI, GLMY…AMPI, LPMG…FGWT, IFWF…IMTS, GVKI…ESLF, and WGCT…PILF.

It belongs to the major facilitator superfamily. CAR1 family.

It is found in the membrane. This is an uncharacterized protein from Schizosaccharomyces pombe (strain 972 / ATCC 24843) (Fission yeast).